A 346-amino-acid chain; its full sequence is Inositol 2-dehydrogenase/D-chiro-inositol 3-dehydrogenase (346 aa).

The segment covering G322–K331 has biased composition (basic and acidic residues). The segment at G322 to V346 is disordered.

This sequence belongs to the Gfo/Idh/MocA family. In terms of assembly, homotetramer.

It carries out the reaction myo-inositol + NAD(+) = scyllo-inosose + NADH + H(+). The catalysed reaction is 1D-chiro-inositol + NAD(+) = scyllo-inosine + NADH + H(+). It participates in polyol metabolism; myo-inositol degradation into acetyl-CoA; acetyl-CoA from myo-inositol: step 1/7. Its function is as follows. Involved in the oxidation of myo-inositol (MI) and D-chiro-inositol (DCI) to 2-keto-myo-inositol (2KMI or 2-inosose) and 1-keto-D-chiro-inositol (1KDCI), respectively. This is Inositol 2-dehydrogenase/D-chiro-inositol 3-dehydrogenase from Shouchella clausii (strain KSM-K16) (Alkalihalobacillus clausii).